A 456-amino-acid polypeptide reads, in one-letter code: Signal transduction histidine-protein kinase ArlS (456 aa).

Helical transmembrane passes span 13–33 (LITT…IIFF) and 157–177 (IVAL…SYIF). Residues 179–232 (SQITKPIVTMSNKMNQIRRDGFQNKLELTTNYEETDNLIDTFNEMMYQIEESFN) form the HAMP domain. Positions 240–456 (DASHELRTPL…TFKISFPVLN (217 aa)) constitute a Histidine kinase domain. H243 bears the Phosphohistidine; by autocatalysis mark.

Autophosphorylated.

The protein resides in the cell membrane. It carries out the reaction ATP + protein L-histidine = ADP + protein N-phospho-L-histidine.. In terms of biological role, member of the two-component regulatory system ArlS/ArlR. ArlS probably functions as a sensor protein kinase which is autophosphorylated at a histidine residue and transfers its phosphate group to ArlR. The protein is Signal transduction histidine-protein kinase ArlS (arlS) of Staphylococcus epidermidis (strain ATCC 12228 / FDA PCI 1200).